Here is a 361-residue protein sequence, read N- to C-terminus: Molybdenum import ATP-binding protein ModC (361 aa).

One can recognise an ABC transporter domain in the interval 1-235; sequence MDGLRLRFRR…VDLPLALDDD (235 aa). 33 to 40 is a binding site for ATP; that stretch reads GHSGSGKS. The Mop domain maps to 296–361; it reads QSSILNRLPV…AQIKSVAVLA (66 aa).

Belongs to the ABC transporter superfamily. Molybdate importer (TC 3.A.1.8) family. In terms of assembly, the complex is composed of two ATP-binding proteins (ModC), two transmembrane proteins (ModB) and a solute-binding protein (ModA).

It localises to the cell inner membrane. It carries out the reaction molybdate(out) + ATP + H2O = molybdate(in) + ADP + phosphate + H(+). Its function is as follows. Part of the ABC transporter complex ModABC involved in molybdenum import. Responsible for energy coupling to the transport system. The sequence is that of Molybdenum import ATP-binding protein ModC from Pseudomonas aeruginosa (strain ATCC 15692 / DSM 22644 / CIP 104116 / JCM 14847 / LMG 12228 / 1C / PRS 101 / PAO1).